Here is a 554-residue protein sequence, read N- to C-terminus: Hydroxylamine reductase (554 aa).

The [2Fe-2S] cluster site is built by C3, C6, C18, and C25. H252, E276, C320, C408, C436, C461, E495, and K497 together coordinate hybrid [4Fe-2O-2S] cluster. C408 carries the cysteine persulfide modification.

This sequence belongs to the HCP family. Requires [2Fe-2S] cluster as cofactor. Hybrid [4Fe-2O-2S] cluster is required as a cofactor.

Its subcellular location is the cytoplasm. The catalysed reaction is A + NH4(+) + H2O = hydroxylamine + AH2 + H(+). Functionally, catalyzes the reduction of hydroxylamine to form NH(3) and H(2)O. The chain is Hydroxylamine reductase from Shewanella loihica (strain ATCC BAA-1088 / PV-4).